A 283-amino-acid polypeptide reads, in one-letter code: Diaminopimelate epimerase (283 aa).

Positions 13, 46, and 66 each coordinate substrate. The active-site Proton donor is Cys75. Substrate is bound by residues 76-77 (GN), Asn166, Asn199, and 217-218 (ER). The active-site Proton acceptor is Cys226. 227-228 (GT) lines the substrate pocket.

This sequence belongs to the diaminopimelate epimerase family. In terms of assembly, homodimer.

Its subcellular location is the cytoplasm. It carries out the reaction (2S,6S)-2,6-diaminopimelate = meso-2,6-diaminopimelate. It functions in the pathway amino-acid biosynthesis; L-lysine biosynthesis via DAP pathway; DL-2,6-diaminopimelate from LL-2,6-diaminopimelate: step 1/1. In terms of biological role, catalyzes the stereoinversion of LL-2,6-diaminopimelate (L,L-DAP) to meso-diaminopimelate (meso-DAP), a precursor of L-lysine and an essential component of the bacterial peptidoglycan. The protein is Diaminopimelate epimerase of Herminiimonas arsenicoxydans.